Here is a 256-residue protein sequence, read N- to C-terminus: Protein CC2D2B homolog (256 aa).

A disordered region spans residues 1 to 24 (MSEEMDNVTAEEITDKHLQKDLDA). Residues 13–22 (ITDKHLQKDL) show a composition bias toward basic and acidic residues. Coiled coils occupy residues 136-159 (DLLK…KANI) and 194-214 (EIYK…EEGK).

The sequence is that of Protein CC2D2B homolog from Macaca fascicularis (Crab-eating macaque).